We begin with the raw amino-acid sequence, 420 residues long: Histidine--tRNA ligase (420 aa).

This sequence belongs to the class-II aminoacyl-tRNA synthetase family. As to quaternary structure, homodimer.

It localises to the cytoplasm. It catalyses the reaction tRNA(His) + L-histidine + ATP = L-histidyl-tRNA(His) + AMP + diphosphate + H(+). The chain is Histidine--tRNA ligase (hisS) from Mycoplasmopsis pulmonis (strain UAB CTIP) (Mycoplasma pulmonis).